Consider the following 387-residue polypeptide: G2/mitotic-specific cyclin-B2 (387 aa).

This sequence belongs to the cyclin family. Cyclin AB subfamily. As to quaternary structure, interacts with the CDK1 protein kinase to form a serine/threonine kinase holoenzyme complex also known as maturation promoting factor (MPF). The cyclin subunit imparts substrate specificity to the complex.

Functionally, essential for the control of the cell cycle at the G2/M (mitosis) transition. The chain is G2/mitotic-specific cyclin-B2 (ccnb2) from Oryzias latipes (Japanese rice fish).